The sequence spans 76 residues: MTDKFMPWIDELPNVDQELVAQRNAIAEKQRRADELMRQVERLRIEVMRESSRLEERAKQRWTFNEIDLAKFRAGH.

To E.coli KleA (KcrA1).

This is Protein KleC (kleC) from Escherichia coli.